We begin with the raw amino-acid sequence, 98 residues long: Large ribosomal subunit protein uL23 (98 aa).

The protein belongs to the universal ribosomal protein uL23 family. Part of the 50S ribosomal subunit. Contacts protein L29, and trigger factor when it is bound to the ribosome.

Functionally, one of the early assembly proteins it binds 23S rRNA. One of the proteins that surrounds the polypeptide exit tunnel on the outside of the ribosome. Forms the main docking site for trigger factor binding to the ribosome. This chain is Large ribosomal subunit protein uL23, found in Chromohalobacter salexigens (strain ATCC BAA-138 / DSM 3043 / CIP 106854 / NCIMB 13768 / 1H11).